The following is a 581-amino-acid chain: Netrin-3 (581 aa).

Positions 1-15 (LRLLLTTSVLRLARA) are cleaved as a signal peptide. The region spanning 35-261 (APRRCIPEFV…SVGELQVGGR (227 aa)) is the Laminin N-terminal domain. N-linked (GlcNAc...) asparagine glycans are attached at residues asparagine 88 and asparagine 103. Cystine bridges form between cysteine 91–cysteine 124, cysteine 262–cysteine 271, cysteine 264–cysteine 281, cysteine 283–cysteine 292, cysteine 295–cysteine 315, cysteine 318–cysteine 327, cysteine 320–cysteine 345, cysteine 348–cysteine 357, cysteine 360–cysteine 378, cysteine 381–cysteine 393, cysteine 383–cysteine 400, cysteine 402–cysteine 411, cysteine 414–cysteine 428, cysteine 449–cysteine 521, and cysteine 468–cysteine 578. Laminin EGF-like domains follow at residues 262–317 (CKCN…ECLA), 318–380 (CNCN…ACKA), and 381–430 (CDCH…PCIK). An N-linked (GlcNAc...) asparagine glycan is attached at asparagine 394. The NTR domain occupies 449–578 (CDSYCKPAKG…LQRREKKGKC (130 aa)). A Cell attachment site motif is present at residues 507–509 (RGD). Asparagine 540 carries an N-linked (GlcNAc...) asparagine glycan.

Its subcellular location is the secreted. The protein localises to the extracellular space. The protein resides in the extracellular matrix. Functionally, netrins control guidance of CNS commissural axons and peripheral motor axons. This is Netrin-3 (NTN3) from Gallus gallus (Chicken).